The primary structure comprises 103 residues: Nucleoid-associated protein CFF8240_0066 (103 aa).

Belongs to the YbaB/EbfC family. Homodimer.

The protein resides in the cytoplasm. It localises to the nucleoid. In terms of biological role, binds to DNA and alters its conformation. May be involved in regulation of gene expression, nucleoid organization and DNA protection. The protein is Nucleoid-associated protein CFF8240_0066 of Campylobacter fetus subsp. fetus (strain 82-40).